A 149-amino-acid chain; its full sequence is 3-dehydroquinate dehydratase (149 aa).

The Proton acceptor role is filled by Tyr21. Substrate contacts are provided by Asn73, His79, and Asp86. His99 functions as the Proton donor in the catalytic mechanism. Residues 100–101 (LT) and Arg110 contribute to the substrate site.

This sequence belongs to the type-II 3-dehydroquinase family. In terms of assembly, homododecamer.

It carries out the reaction 3-dehydroquinate = 3-dehydroshikimate + H2O. It functions in the pathway metabolic intermediate biosynthesis; chorismate biosynthesis; chorismate from D-erythrose 4-phosphate and phosphoenolpyruvate: step 3/7. Its function is as follows. Catalyzes a trans-dehydration via an enolate intermediate. The chain is 3-dehydroquinate dehydratase from Thermus thermophilus (strain ATCC BAA-163 / DSM 7039 / HB27).